Consider the following 100-residue polypeptide: Small ribosomal subunit protein uS14 (100 aa).

This sequence belongs to the universal ribosomal protein uS14 family. As to quaternary structure, part of the 30S ribosomal subunit. Contacts proteins S3 and S10.

Functionally, binds 16S rRNA, required for the assembly of 30S particles and may also be responsible for determining the conformation of the 16S rRNA at the A site. The sequence is that of Small ribosomal subunit protein uS14 from Prochlorococcus marinus (strain MIT 9303).